The sequence spans 28 residues: Nicotinic acetylcholine receptor-binding protein Mnn-3C (28 aa).

A disulfide bridge connects residues Cys-3 and Cys-24.

Belongs to the three-finger toxin family. Short-chain subfamily. As to expression, expressed by the venom gland.

It localises to the secreted. Binds and may inhibit nicotinic acetylcholine receptors (nAChR). This is Nicotinic acetylcholine receptor-binding protein Mnn-3C from Micrurus nigrocinctus (Central American coral snake).